The chain runs to 241 residues: tRNA (guanine-N(7)-)-methyltransferase (241 aa).

Residues 1-10 are compositionally biased toward polar residues; sequence MTESNETPNT. A disordered region spans residues 1–21; it reads MTESNETPNTPEAGDESKHRR. Glu-71, Glu-96, Asp-123, and Asp-146 together coordinate S-adenosyl-L-methionine. Asp-146 is an active-site residue. Substrate is bound by residues Lys-150, Asp-182, and 219-222; that span reads TKFE.

It belongs to the class I-like SAM-binding methyltransferase superfamily. TrmB family.

It catalyses the reaction guanosine(46) in tRNA + S-adenosyl-L-methionine = N(7)-methylguanosine(46) in tRNA + S-adenosyl-L-homocysteine. It participates in tRNA modification; N(7)-methylguanine-tRNA biosynthesis. Catalyzes the formation of N(7)-methylguanine at position 46 (m7G46) in tRNA. The chain is tRNA (guanine-N(7)-)-methyltransferase from Pseudomonas fluorescens (strain SBW25).